A 350-amino-acid chain; its full sequence is Dauer larva development regulatory growth factor daf-7 (350 aa).

The signal sequence occupies residues methionine 1–threonine 21. Positions phenylalanine 22–arginine 234 are excised as a propeptide. N-linked (GlcNAc...) asparagine glycosylation is present at asparagine 23. Cystine bridges form between cysteine 241–cysteine 251, cysteine 250–cysteine 315, cysteine 278–cysteine 347, and cysteine 282–cysteine 349.

It belongs to the TGF-beta family. As to expression, expressed in the chemosensory neurons, including in the ASJ neurons in males. Expressed in the ASI neurons.

The protein localises to the secreted. In terms of biological role, under harsh environmental conditions, larvae enter a developmentally arrested state known as dauer; TGF-beta-like daf-7 acts to inhibit dauer larva formation and promote growth. May be a ligand to cell surface receptor daf-4. May act as a negative regulator of dauer larva development by transducing chemosensory information from ASI neurons. Involved in sensitivity to CO2 levels. Involved in mate searching behavior of males, acting in concert with the neuropeptide pdf-1. In AWC neurons, acts to promote expression of srsx-3, a member of the GPCR family. This Caenorhabditis elegans protein is Dauer larva development regulatory growth factor daf-7.